We begin with the raw amino-acid sequence, 369 residues long: Core histone macro-H2A.1 (369 aa).

Residues 2 to 117 form the Histone H2A domain; the sequence is SSRGGKKKST…NIHPELLAKK (116 aa). N6-lactoyllysine; alternate is present on residues K7 and K9. K18 carries the N6-methyllysine modification. An N6-acetyllysine; alternate modification is found at K116. K116 is covalently cross-linked (Glycyl lysine isopeptide (Lys-Gly) (interchain with G-Cter in ubiquitin); alternate). K117 participates in a covalent cross-link: Glycyl lysine isopeptide (Lys-Gly) (interchain with G-Cter in ubiquitin). An N6-acetyllysine; alternate modification is found at K123. K123 carries the post-translational modification N6,N6-dimethyllysine; alternate. K123 participates in a covalent cross-link: Glycyl lysine isopeptide (Lys-Gly) (interchain with G-Cter in SUMO2); alternate. Residues 128–180 are disordered; the sequence is ITPPPAKKAKSPSQKKPVSKKAGGKKGARKSKKKQGEVSKAASADSTTEGTPA. Position 129 is a phosphothreonine (T129). The segment covering 144-160 has biased composition (basic residues); sequence PVSKKAGGKKGARKSKK. K167 participates in a covalent cross-link: Glycyl lysine isopeptide (Lys-Gly) (interchain with G-Cter in SUMO2). Phosphoserine occurs at positions 170 and 173. T178 is subject to Phosphothreonine. The Macro domain occupies 184–367; sequence TVLSTKSLFL…IYVQEMAKLD (184 aa). A Glycyl lysine isopeptide (Lys-Gly) (interchain with G-Cter in SUMO2) cross-link involves residue K189. D203, I204, V226, S275, G312, S313, G314, and N316 together coordinate a glycoprotein. K320 participates in a covalent cross-link: Glycyl lysine isopeptide (Lys-Gly) (interchain with G-Cter in SUMO2).

This sequence belongs to the histone H2A family. As to quaternary structure, the nucleosome is a histone octamer containing two molecules each of H2A, H2B, H3 and H4 assembled in one H3-H4 heterotetramer and two H2A-H2B heterodimers. Interacts with HDAC1 and HDAC2. Interacts with SPOP. Part of a complex consisting of MACROH2A1, CUL3 and SPOP. Interacts with PARP1. Monoubiquitinated at either Lys-116 or Lys-117. May also be polyubiquitinated. Ubiquitination is mediated by the CUL3/SPOP E3 complex and does not promote proteasomal degradation. Instead, it is required for enrichment in inactive X chromosome chromatin. In terms of tissue distribution, widely expressed.

It is found in the nucleus. It localises to the chromosome. Variant histone H2A which replaces conventional H2A in a subset of nucleosomes where it represses transcription. Nucleosomes wrap and compact DNA into chromatin, limiting DNA accessibility to the cellular machineries which require DNA as a template. Histones thereby play a central role in transcription regulation, DNA repair, DNA replication and chromosomal stability. DNA accessibility is regulated via a complex set of post-translational modifications of histones, also called histone code, and nucleosome remodeling. Involved in stable X chromosome inactivation. Inhibits the binding of transcription factors, including NF-kappa-B, and interferes with the activity of remodeling SWI/SNF complexes. Inhibits histone acetylation by EP300 and recruits class I HDACs, which induces a hypoacetylated state of chromatin. In terms of biological role, isoform that specifically binds poly-ADP-ribose and O-acetyl-ADP-ribose and plays a key role in NAD(+) metabolism. Able to bind to the ends of poly-ADP-ribose chains created by PARP1 and cap them. This prevents PARP1 from further addition of ADP-ribose and thus limits the consumption of nuclear NAD(+), allowing the cell to maintain proper NAD(+) levels in both the nucleus and the mitochondria to promote proper mitochondrial respiration. Increases the expression of genes involved in redox metabolism, including SOD3. Its function is as follows. In contrast to isoform 1, does not bind poly-ADP-ribose. Represses SOD3 gene expression. This is Core histone macro-H2A.1 from Homo sapiens (Human).